A 63-amino-acid polypeptide reads, in one-letter code: Cytochrome c oxidase subunit 7C, mitochondrial (63 aa).

The transit peptide at 1-16 directs the protein to the mitochondrion; it reads MLGQSIRRFTTSVVRR. The Mitochondrial matrix portion of the chain corresponds to 17-33; it reads SHYEEGPGKNIPFSVEN. Lysine 25 is subject to N6-acetyllysine; alternate. Residue lysine 25 is modified to N6-succinyllysine; alternate. Residues 34-60 form a helical membrane-spanning segment; it reads KWRLLAMMTLFFGSGFAAPFFIVRHQL. At 61 to 63 the chain is on the mitochondrial intermembrane side; sequence LKK.

This sequence belongs to the cytochrome c oxidase VIIc family. As to quaternary structure, component of the cytochrome c oxidase (complex IV, CIV), a multisubunit enzyme composed of 14 subunits. The complex is composed of a catalytic core of 3 subunits MT-CO1, MT-CO2 and MT-CO3, encoded in the mitochondrial DNA, and 11 supernumerary subunits COX4I1 (or COX4I2), COX5A, COX5B, COX6A2 (or COX6A1), COX6B1 (or COX6B2), COX6C, COX7A1 (or COX7A2), COX7B, COX7C, COX8B and NDUFA4, which are encoded in the nuclear genome. The complex exists as a monomer or a dimer and forms supercomplexes (SCs) in the inner mitochondrial membrane with NADH-ubiquinone oxidoreductase (complex I, CI) and ubiquinol-cytochrome c oxidoreductase (cytochrome b-c1 complex, complex III, CIII), resulting in different assemblies (supercomplex SCI(1)III(2)IV(1) and megacomplex MCI(2)III(2)IV(2)). Interacts with RAB5IF. Liver, heart, muscle and brain, contain the same isoform of COX VIIc, but at different concentrations.

It is found in the mitochondrion inner membrane. It functions in the pathway energy metabolism; oxidative phosphorylation. In terms of biological role, component of the cytochrome c oxidase, the last enzyme in the mitochondrial electron transport chain which drives oxidative phosphorylation. The respiratory chain contains 3 multisubunit complexes succinate dehydrogenase (complex II, CII), ubiquinol-cytochrome c oxidoreductase (cytochrome b-c1 complex, complex III, CIII) and cytochrome c oxidase (complex IV, CIV), that cooperate to transfer electrons derived from NADH and succinate to molecular oxygen, creating an electrochemical gradient over the inner membrane that drives transmembrane transport and the ATP synthase. Cytochrome c oxidase is the component of the respiratory chain that catalyzes the reduction of oxygen to water. Electrons originating from reduced cytochrome c in the intermembrane space (IMS) are transferred via the dinuclear copper A center (CU(A)) of subunit 2 and heme A of subunit 1 to the active site in subunit 1, a binuclear center (BNC) formed by heme A3 and copper B (CU(B)). The BNC reduces molecular oxygen to 2 water molecules using 4 electrons from cytochrome c in the IMS and 4 protons from the mitochondrial matrix. This is Cytochrome c oxidase subunit 7C, mitochondrial (COX7C) from Bos taurus (Bovine).